Reading from the N-terminus, the 30-residue chain is Cyclotide hyen-E (30 aa).

A cross-link (cyclopeptide (Gly-Asn)) is located at residues 1 to 30 (GVPCGESCVYIPCFTGIINCSCRDKVCYNN). 3 disulfides stabilise this stretch: cysteine 4–cysteine 20, cysteine 8–cysteine 22, and cysteine 13–cysteine 27.

In terms of processing, this is a cyclic peptide. Detected in stems (at protein level).

Functionally, probably participates in a plant defense mechanism. Has cytotoxic activity against HUVEC cells (LC(50)= 2.17 uM) and various cancer cells including HeLa (LC(50)= 3.05 uM), MCF-7 and K562. Displays very weak hemolytic activity. Binds to and induces leakage in phospholipd membranes, particularly ones containing 1-palmitoyl-2-oleophosphatidylethanolamine (POPE). This Pigea enneasperma (Spade flower) protein is Cyclotide hyen-E.